A 424-amino-acid chain; its full sequence is MNHTDIAKRVYNHTWKLDPIVRSLLDTDFYKLLMLQMIWGLYPDVHVTFSLINRNKAIHLADDIDEGELRAQLDHTLSLRFTKKEIIWLAGNTFYGQKQIFKPDFLHWLENFQLPDYELSRKDGQYILHFHGSWAYSSMWEIPALTIISELRSRAAMKNLDRFALDVLYARAKAKMWSKIERLKKLPDIKISDFGTRRRHSFLWQRWCVEALKEGIGASFTGTSNVLLAMDTDLEALGTNAHELPMVIAALTNNDDDLRKAPYQVLQDWKRYYEGNLLIVLPDTFGTEAFLRNAPKWVADWTGFRPDSAPPIEGGERIIQWWQEQGKKPQEKLLIFSDALDVDTIEKTYHHFHGKVRMIFGWGTNLTNDFANCAPQEIADLDVTSLVCKVTSANGRPAVKLSDNPEKTIGNPQEIQRYLNFFSH.

Position 242 is a phosphohistidine; by autocatalysis (histidine 242).

This sequence belongs to the NAPRTase family. Post-translationally, transiently phosphorylated on a His residue during the reaction cycle. Phosphorylation strongly increases the affinity for substrates and increases the rate of nicotinate D-ribonucleotide production. Dephosphorylation regenerates the low-affinity form of the enzyme, leading to product release.

It catalyses the reaction nicotinate + 5-phospho-alpha-D-ribose 1-diphosphate + ATP + H2O = nicotinate beta-D-ribonucleotide + ADP + phosphate + diphosphate. Its pathway is cofactor biosynthesis; NAD(+) biosynthesis; nicotinate D-ribonucleotide from nicotinate: step 1/1. Catalyzes the synthesis of beta-nicotinate D-ribonucleotide from nicotinate and 5-phospho-D-ribose 1-phosphate at the expense of ATP. This is Nicotinate phosphoribosyltransferase from Bartonella bacilliformis (strain ATCC 35685 / KC583 / Herrer 020/F12,63).